A 738-amino-acid polypeptide reads, in one-letter code: Polyribonucleotide nucleotidyltransferase (738 aa).

The Mg(2+) site is built by Asp-528 and Asp-534. One can recognise a KH domain in the interval 594-653; that stretch reads PRVVRVKIPVQKIGELIGPKGKVINSIQDETGAEISIEDDGTVYIGSSQADSSEKAVAMV. An S1 motif domain is found at 665–737; that stretch reads GSQFLGTVVK…DRGKLCLVAV (73 aa).

Belongs to the polyribonucleotide nucleotidyltransferase family. Requires Mg(2+) as cofactor.

The protein resides in the cytoplasm. It catalyses the reaction RNA(n+1) + phosphate = RNA(n) + a ribonucleoside 5'-diphosphate. Functionally, involved in mRNA degradation. Catalyzes the phosphorolysis of single-stranded polyribonucleotides processively in the 3'- to 5'-direction. This chain is Polyribonucleotide nucleotidyltransferase, found in Tropheryma whipplei (strain Twist) (Whipple's bacillus).